Consider the following 88-residue polypeptide: Small ribosomal subunit protein uS17 (88 aa).

This sequence belongs to the universal ribosomal protein uS17 family. Part of the 30S ribosomal subunit.

Functionally, one of the primary rRNA binding proteins, it binds specifically to the 5'-end of 16S ribosomal RNA. The sequence is that of Small ribosomal subunit protein uS17 from Prochlorococcus marinus (strain NATL1A).